A 124-amino-acid chain; its full sequence is MATKEQNLKRLDELALILGREPDISGSAAEIAQRVAEWEEEMQSSGDDVQVMNMDIRERETAAHDVREETSGALTRIRVLTCLHLCGVDGETGESVELADVGRVILIMSSDAKTHVDGGMAVYA.

To phage lambda packaging protein FI.

This is an uncharacterized protein from Enterobacteria phage P21 (Bacteriophage 21).